The sequence spans 1017 residues: Sodium/potassium-transporting ATPase subunit alpha-2 (1017 aa).

The disordered stretch occupies residues 1 to 31 (MDGREYSPAATTSENGGGRRKQKEKELDELK). Residues 1–82 (MDGREYSPAA…NALTPPPTTP (82 aa)) are Cytoplasmic-facing. The segment at 77–79 (PPP) is interaction with phosphoinositide-3 kinase. Residues 83 to 103 (EWVKFCRQLFGGFSILLWIGA) traverse the membrane as a helical segment. Residues 104-126 (ILCFLAYGIQAAMEDEPSNDNLY) lie on the Extracellular side of the membrane. The helical transmembrane segment at 127–147 (LGVVLAAVVIVTGCFSYYQEA) threads the bilayer. At 148–283 (KSSKIMDSFK…VGRTPIAMEI (136 aa)) the chain is on the cytoplasmic side. The disordered stretch occupies residues 207–228 (KVDNSSLTGESEPQTRSPEFTH). Positions 209-224 (DNSSLTGESEPQTRSP) are enriched in polar residues. Residues 284–303 (EHFIRLITGVAVFLGLSFFI) form a helical membrane-spanning segment. Residues 304 to 315 (LSLILGYTWLEA) are Extracellular-facing. A helical membrane pass occupies residues 316–333 (VIFLIGIIVANVPEGLLA). The Cytoplasmic segment spans residues 334–766 (TVTVCLTLTA…EEGRLIFDNL (433 aa)). The active-site 4-aspartylphosphate intermediate is the Asp-371. ATP is bound at residue Lys-502. Residues Asp-711 and Asp-715 each coordinate Mg(2+). The helical transmembrane segment at 767-786 (KKSIAYTLTSNIPEITPFLL) threads the bilayer. The Extracellular segment spans residues 787 to 796 (FIIANIPLPL). Residues 797–817 (GTVTILCIDLGTDMVPAISLA) form a helical membrane-spanning segment. The Cytoplasmic segment spans residues 818 to 837 (YEAAESDIMKRQPRNPRTDK). The chain crosses the membrane as a helical span at residues 838-860 (LVNERLISMAYGQIGMIQALGGF). Topologically, residues 861–912 (FTYFVILAENGFLPARLLGVRLAWDDRSTNDLEDSYGQEWTYEQRKVVEFTC) are extracellular. Residues 913–932 (HTAFFASIVVVQWADLIICK) form a helical membrane-spanning segment. Residues 933-945 (TRRNSVFQQGMKN) are Cytoplasmic-facing. At Ser-937 the chain carries Phosphoserine; by PKA. Residues 946-964 (KILIFGLLEETALAAFLSY) traverse the membrane as a helical segment. At 965-979 (CPGMGVALRMYPLKV) the chain is on the extracellular side. The chain crosses the membrane as a helical span at residues 980–1000 (TWWFCAFPYSLLIFAYDEVRK). Residues 1001–1017 (LILRRYPGGWVEKETYY) are Cytoplasmic-facing.

The protein belongs to the cation transport ATPase (P-type) (TC 3.A.3) family. Type IIC subfamily. The sodium/potassium-transporting ATPase is composed of a catalytic alpha subunit, an auxiliary non-catalytic beta subunit and an additional regulatory subunit.

The protein resides in the membrane. The protein localises to the cell membrane. It catalyses the reaction K(+)(out) + Na(+)(in) + ATP + H2O = K(+)(in) + Na(+)(out) + ADP + phosphate + H(+). In terms of biological role, this is the catalytic component of the active enzyme, which catalyzes the hydrolysis of ATP coupled with the exchange of sodium and potassium ions across the plasma membrane. This action creates the electrochemical gradient of sodium and potassium ions, providing the energy for active transport of various nutrients. The protein is Sodium/potassium-transporting ATPase subunit alpha-2 (ATP1A2) of Gallus gallus (Chicken).